The chain runs to 115 residues: Large ribosomal subunit protein eL30 (115 aa).

Residues serine 10 and serine 16 each carry the phosphoserine modification. Lysine 26 is subject to N6-acetyllysine; alternate. Residue lysine 26 forms a Glycyl lysine isopeptide (Lys-Gly) (interchain with G-Cter in SUMO2); alternate linkage.

It belongs to the eukaryotic ribosomal protein eL30 family. Component of the large ribosomal subunit.

It is found in the cytoplasm. Component of the large ribosomal subunit. The ribosome is a large ribonucleoprotein complex responsible for the synthesis of proteins in the cell. The polypeptide is Large ribosomal subunit protein eL30 (RPL30) (Homo sapiens (Human)).